The chain runs to 355 residues: 3-dehydroquinate synthase (355 aa).

NAD(+) contacts are provided by residues 69 to 74 (DGEQHK), 103 to 107 (GVIGD), 127 to 128 (TT), Lys140, Lys149, and 167 to 170 (TLQT). Positions 182, 245, and 262 each coordinate Zn(2+).

The protein belongs to the sugar phosphate cyclases superfamily. Dehydroquinate synthase family. Co(2+) is required as a cofactor. Zn(2+) serves as cofactor. It depends on NAD(+) as a cofactor.

Its subcellular location is the cytoplasm. The enzyme catalyses 7-phospho-2-dehydro-3-deoxy-D-arabino-heptonate = 3-dehydroquinate + phosphate. Its pathway is metabolic intermediate biosynthesis; chorismate biosynthesis; chorismate from D-erythrose 4-phosphate and phosphoenolpyruvate: step 2/7. Catalyzes the conversion of 3-deoxy-D-arabino-heptulosonate 7-phosphate (DAHP) to dehydroquinate (DHQ). The polypeptide is 3-dehydroquinate synthase (Pseudoalteromonas atlantica (strain T6c / ATCC BAA-1087)).